Consider the following 467-residue polypeptide: Ribulose bisphosphate carboxylase large chain (467 aa).

Positions 1–2 (MS) are excised as a propeptide. At Pro-3 the chain carries N-acetylproline. The residue at position 14 (Lys-14) is an N6,N6,N6-trimethyllysine. Substrate is bound by residues Asn-123 and Thr-173. Lys-175 (proton acceptor) is an active-site residue. Lys-177 is a substrate binding site. Mg(2+) is bound by residues Lys-201, Asp-203, and Glu-204. Lys-201 is modified (N6-carboxylysine). The Proton acceptor role is filled by His-294. Substrate-binding residues include Arg-295, His-327, and Ser-379.

Belongs to the RuBisCO large chain family. Type I subfamily. Heterohexadecamer of 8 large chains and 8 small chains; disulfide-linked. The disulfide link is formed within the large subunit homodimers. Requires Mg(2+) as cofactor. The disulfide bond which can form in the large chain dimeric partners within the hexadecamer appears to be associated with oxidative stress and protein turnover.

It is found in the plastid. The protein resides in the chloroplast. It carries out the reaction 2 (2R)-3-phosphoglycerate + 2 H(+) = D-ribulose 1,5-bisphosphate + CO2 + H2O. The enzyme catalyses D-ribulose 1,5-bisphosphate + O2 = 2-phosphoglycolate + (2R)-3-phosphoglycerate + 2 H(+). Functionally, ruBisCO catalyzes two reactions: the carboxylation of D-ribulose 1,5-bisphosphate, the primary event in carbon dioxide fixation, as well as the oxidative fragmentation of the pentose substrate in the photorespiration process. Both reactions occur simultaneously and in competition at the same active site. This is Ribulose bisphosphate carboxylase large chain from Calamus usitatus (Palm tree).